We begin with the raw amino-acid sequence, 262 residues long: Acyl-[acyl-carrier-protein]--UDP-N-acetylglucosamine O-acyltransferase (262 aa).

It belongs to the transferase hexapeptide repeat family. LpxA subfamily. As to quaternary structure, homotrimer.

Its subcellular location is the cytoplasm. The enzyme catalyses a (3R)-hydroxyacyl-[ACP] + UDP-N-acetyl-alpha-D-glucosamine = a UDP-3-O-[(3R)-3-hydroxyacyl]-N-acetyl-alpha-D-glucosamine + holo-[ACP]. It functions in the pathway glycolipid biosynthesis; lipid IV(A) biosynthesis; lipid IV(A) from (3R)-3-hydroxytetradecanoyl-[acyl-carrier-protein] and UDP-N-acetyl-alpha-D-glucosamine: step 1/6. Its function is as follows. Involved in the biosynthesis of lipid A, a phosphorylated glycolipid that anchors the lipopolysaccharide to the outer membrane of the cell. The polypeptide is Acyl-[acyl-carrier-protein]--UDP-N-acetylglucosamine O-acyltransferase (Enterobacter sp. (strain 638)).